The sequence spans 404 residues: Cysteine desulfurase IscS (404 aa).

Residues 75 to 76 (AT), Asn155, Gln183, and 203 to 205 (SAH) each bind pyridoxal 5'-phosphate. Lys206 is subject to N6-(pyridoxal phosphate)lysine. Thr243 is a pyridoxal 5'-phosphate binding site. Cys328 functions as the Cysteine persulfide intermediate in the catalytic mechanism. Cys328 is a binding site for [2Fe-2S] cluster.

The protein belongs to the class-V pyridoxal-phosphate-dependent aminotransferase family. NifS/IscS subfamily. Homodimer. Forms a heterotetramer with IscU, interacts with other sulfur acceptors. The cofactor is pyridoxal 5'-phosphate.

The protein resides in the cytoplasm. The enzyme catalyses (sulfur carrier)-H + L-cysteine = (sulfur carrier)-SH + L-alanine. It functions in the pathway cofactor biosynthesis; iron-sulfur cluster biosynthesis. Functionally, master enzyme that delivers sulfur to a number of partners involved in Fe-S cluster assembly, tRNA modification or cofactor biosynthesis. Catalyzes the removal of elemental sulfur atoms from cysteine to produce alanine. Functions as a sulfur delivery protein for Fe-S cluster synthesis onto IscU, an Fe-S scaffold assembly protein, as well as other S acceptor proteins. The chain is Cysteine desulfurase IscS from Proteus mirabilis (strain HI4320).